The primary structure comprises 114 residues: Ig kappa chain V region AH80-5 (114 aa).

The segment at 1–22 is framework-1; the sequence is IVMTQTPSSKSVPVGDTVTINC. The segment at 23 to 35 is complementarity-determining-1; that stretch reads QAAQSVYSNNRLS. Positions 36-50 are framework-2; the sequence is WFQQKPGQPPKGLIY. The complementarity-determining-2 stretch occupies residues 51–57; the sequence is YASTLAS. Positions 58-93 are framework-3; sequence GVQQDPSRFKGSGSGTQFTLTISDVQCBBAATVYYC. The interval 94 to 103 is complementarity-determining-3; it reads QGYKSSDTRA. Positions 104–113 are framework-4; it reads FGGGTEVVVK.

This chain is Ig kappa chain V region AH80-5, found in Oryctolagus cuniculus (Rabbit).